A 79-amino-acid polypeptide reads, in one-letter code: MAEAGARRPFFRRRKTCPFTGANAPKIDYKDSKLLMRYVSERGKIVPSRITAVSAKKQRELARAIKRARFLGLLPYVIR.

Part of the 30S ribosomal subunit. Forms a tight heterodimer with protein bS6. Post-translationally, both N-terminus methionine truncation and retention have been observed for this protein. In terms of processing, may be methylated up to 6 times, on undetermined residues.

Its function is as follows. Binds as a heterodimer with protein bS6 to the central domain of the 16S rRNA, where it helps stabilize the platform of the 30S subunit. This chain is Small ribosomal subunit protein bS18, found in Rhodopseudomonas palustris (strain ATCC BAA-98 / CGA009).